Reading from the N-terminus, the 128-residue chain is Lysozyme C-1 (128 aa).

Residues 1-128 (KVYDRCEFAR…VSQYIRGCKL (128 aa)) form the C-type lysozyme domain. 4 disulfides stabilise this stretch: C6-C126, C30-C114, C63-C79, and C75-C93. Active-site residues include E35 and D51.

It belongs to the glycosyl hydrolase 22 family. In terms of assembly, monomer.

It localises to the secreted. It carries out the reaction Hydrolysis of (1-&gt;4)-beta-linkages between N-acetylmuramic acid and N-acetyl-D-glucosamine residues in a peptidoglycan and between N-acetyl-D-glucosamine residues in chitodextrins.. Functionally, lysozymes have primarily a bacteriolytic function; those in tissues and body fluids are associated with the monocyte-macrophage system and enhance the activity of immunoagents. This is Lysozyme C-1 from Sus scrofa (Pig).